The sequence spans 145 residues: Polytheonamide B (145 aa).

Positions 1 to 96 are excised as a propeptide; that stretch reads MADSDNTPTS…DDDLDQAAGG (96 aa). Thr-97 is subject to 2-oxo-5,5-dimethylhexanoate. Ile-99 carries the 3-methylisoleucine modification. The residue at position 101 (Val-101) is a 3-methylvaline. Val-102 is subject to 3-methyl-D-valine. At Val-103 the chain carries 3-methylvaline. Ala-104 is subject to D-alanine (Ala). Val-105 is modified (3-methylvaline). A 3-methyl-D-valine mark is found at Val-106 and Val-110. At Asn-112 the chain carries N4-methyl-D-asparagine. 3-hydroxyvaline (Thr) is present on Thr-113. Val-117 carries the post-translational modification 3-methylvaline. Asn-118 bears the N4-methyl-D-asparagine mark. Gln-119 bears the (3S)-3-methylglutamine mark. Position 120 is a 3-hydroxy-D-valine (Val-120). An N4-methyl-D-asparagine modification is found at Asn-124. Asn-126 carries the post-translational modification (3R)-N4-methyl-3-hydroxy-D-asparagine. Position 127 is a 3-methylvaline (Val-127). Residue Val-128 is modified to 3-hydroxy-D-valine. Asn-130 and Asn-132 each carry N4-methyl-D-asparagine. (3R)-N4-methyl-3-hydroxy-D-asparagine is present on Asn-134. An N4-methyl-D-asparagine modification is found at Asn-136. Ser-138 bears the D-serine (Ser) mark. Residue Asn-140 is modified to D-asparagine. Met-141 bears the 3,3-dimethylmethionine mark. Asn-142 is modified (D-asparagine). Thr-144 is subject to D-threonine.

Post-translationally, epimerization of most, and perhaps all, L- to D-amino acids is catalyzed by PoyD, when PoyA and PoyD are coexpressed in E.coli. N-methylations are catalyzed by PoyE, when PoyA and PoyE are coexpressed in E.coli. In terms of processing, to obtain 2-oxo-5,5-dimethylhexanoate, Thr-97 is firstly dehydrated by PoyF. The second step possibly corresponds to methylation by PoyB/C, and the third step may be a cleavage by PoyH/J.

Functionally, antimicrobial peptide active against Gram-positive bacteria (MIC=4-&gt;125 ug/ml). May act by forming transmembrane ion channels, since the peptide rapidly depolarizes the bacterial cytoplasmic membrane, simultaneously decreasing the membrane potential and intracellular potassium contents. The chain is Polytheonamide B from Bacterium symbiont subsp. Theonella swinhoei (strain pTSMAC1).